Consider the following 404-residue polypeptide: Tryptophan synthase beta chain (404 aa).

Lysine 91 is modified (N6-(pyridoxal phosphate)lysine).

The protein belongs to the TrpB family. Tetramer of two alpha and two beta chains. It depends on pyridoxal 5'-phosphate as a cofactor.

It carries out the reaction (1S,2R)-1-C-(indol-3-yl)glycerol 3-phosphate + L-serine = D-glyceraldehyde 3-phosphate + L-tryptophan + H2O. It participates in amino-acid biosynthesis; L-tryptophan biosynthesis; L-tryptophan from chorismate: step 5/5. Its function is as follows. The beta subunit is responsible for the synthesis of L-tryptophan from indole and L-serine. The sequence is that of Tryptophan synthase beta chain from Clavibacter michiganensis subsp. michiganensis (strain NCPPB 382).